The following is a 91-amino-acid chain: Elongation factor 1-beta (91 aa).

This sequence belongs to the EF-1-beta/EF-1-delta family.

Promotes the exchange of GDP for GTP in EF-1-alpha/GDP, thus allowing the regeneration of EF-1-alpha/GTP that could then be used to form the ternary complex EF-1-alpha/GTP/AAtRNA. The sequence is that of Elongation factor 1-beta from Thermococcus onnurineus (strain NA1).